Here is a 145-residue protein sequence, read N- to C-terminus: Leptin (145 aa).

A disulfide bridge connects residues cysteine 95 and cysteine 145.

Belongs to the leptin family.

The protein resides in the secreted. Its function is as follows. Key player in the regulation of energy balance and body weight control. Once released into the circulation, has central and peripheral effects by binding LEPR, found in many tissues, which results in the activation of several major signaling pathways. The protein is Leptin (LEP) of Meleagris gallopavo (Wild turkey).